A 385-amino-acid chain; its full sequence is Meiotic recombination protein SPO11-2 (385 aa).

The Topo IIA-type catalytic domain occupies 24 to 169 (LPPAEVRARI…LGIMASSRGA (146 aa)). The O-(5'-phospho-DNA)-tyrosine intermediate role is filled by tyrosine 126. Glutamate 219 and aspartate 272 together coordinate Mg(2+).

It belongs to the TOP6A family. In terms of assembly, interacts with TOP6B. Mg(2+) serves as cofactor. Highly expressed in flowers before pollination. Expressed in roots and shoots.

The protein resides in the nucleus. It carries out the reaction ATP-dependent breakage, passage and rejoining of double-stranded DNA.. Functionally, required for meiotic recombination. Mediates DNA cleavage that forms the double-strand breaks (DSB) that initiate meiotic recombination. The sequence is that of Meiotic recombination protein SPO11-2 (SPO11-2) from Oryza sativa subsp. indica (Rice).